Consider the following 3184-residue polypeptide: Cilia and flagella-associated protein 47 (3184 aa).

One can recognise a Calponin-homology (CH) domain in the interval 1729-1851 (SDSERILLSW…LCVYLYERLP (123 aa)). The tract at residues 2491–2514 (RDEEESQEETDTEKDFSSQETPSD) is disordered. Residues 2493-2502 (EEESQEETDT) show a composition bias toward acidic residues.

As to quaternary structure, interacts with CFAP65. In terms of tissue distribution, highly expressed in spermatzoa (at protein level).

It localises to the cytoplasm. The protein resides in the cytoskeleton. It is found in the flagellum basal body. Functionally, plays a role in flagellar formation and sperm motility. The sequence is that of Cilia and flagella-associated protein 47 from Mus musculus (Mouse).